The primary structure comprises 145 residues: Large ribosomal subunit protein bL17 (145 aa).

Residues 123–145 are disordered; sequence KRVDRKKKDPAKDKTEEKKLATA.

The protein belongs to the bacterial ribosomal protein bL17 family. As to quaternary structure, part of the 50S ribosomal subunit. Contacts protein L32.

In Pelagibacter ubique (strain HTCC1062), this protein is Large ribosomal subunit protein bL17.